The following is an 899-amino-acid chain: MAEPPDAATPKTSPYLKGDELSSDSGPLLSIFALQEIMQKVRQAKSEYMAATKDVDLTIPDVQKIIDGVKELASETIYKVVNKPLISYRHIVMQSRDRFLRVDTYYERMSEVGDKIDENEPAKFYETVIKKVRHLRTEGAFVLHNIPTRDHRGMEIADPEILGVDVKSILPVLTAEHRAMVQHILDGAIIENGIVATRDVDVYFGACSESVYRIYNRLQGYIEAVQLEELRAAITWLERLGRRKRMTFSQEFLTDFRRADTIWVLALQLPANPRVIWQVPRCSIANLIMNIATCLPTGEYVSPNPRIASITLTQRITTTGPFAILTGSTPTAQQLDDVRKIYLALMFPGQIVLDLKIDPGERMDPAVRMVAGVVGHLMFTAGPRFTNITQNMARQLDIALADFLLYMYNTRIQVQYGPTGEPLDFRIGRGQYDCNAFRTNFQTGAGYNGWGLVDVENREPAPYDHVQRFIRYCNIDSRELIHPATFGIGMNYYCYNEMLRMLVAAGKDTEAAFFRNMLPFHMVRFARINQIINEDLHSAFSMPDDQFNVLLANMIAGAQERMDPVVLDISWISIWYAFNRSFEPTRRNEMLESAPLIESVYASELTVMKIDMQQMALLQRRFPDVLIEARPTHFWKAVMEVSPEPVRAIMDLAHSHSFINIRDMMRWIGLPSMQPSMKLVLEEEAWAVANDFEELMLTDQVYMFRDMLPEPRLDDIERFRQEGFYYTNMLDGPPTIDRVVQYTYEVARLQANMGQLRAALRRIMDEEGWVRFGGVLRTVRVKFFDSRPPEEILQALPFDYQTSEKGGLTYATIKYANDTTIYYLIYNVEYSNLPDSLVLINPTYVMTKVFINKRIVERVRVGQALAVMNKRFIAYKGKMRIMDITQALKVGTKLAAPTV.

Residues 1–22 (MAEPPDAATPKTSPYLKGDELS) are disordered.

It belongs to the orbivirus VP3 family.

The protein localises to the virion. Functionally, the VP3 protein is one of the five proteins (with VP1, VP4, VP6 and VP7) which form the inner capsid of the virus. The chain is Core protein VP3 (Segment-3) from Antilocapra americana (Pronghorn).